The following is a 457-amino-acid chain: MSWSILEFLRKNPEELKNNLKRRAIDVSLVDKAVELDKKWRQVLQEVERLRHQHNVLSSQIPKLSGEERKKKIEESKNLLKILEDKEKELEKIEVERDRLLSSLPNLVADDVPNGPDDSYNIPIKFWGKFKVYEGDVEEFLRQTKDANVNYEIIKWKPKGHAEMLEDVLHLGNTLKAAEIAGSRFYYLFNDIVWLDFALLLFAIDYITQQGYTLVLPPYMLRGEVIQSVIDLDTFKDAIYKIENEDLYLIATAEHSIAAMFFKEEIEKDKLPLKFAGISPAFRKEAGAANKDLKGIFRVHQFHKVEQFIFSTPEDSWKYHAELITNAESIFQQLELPYRIVNIASGDLGACAAKKFDLEVWMPAQAKFREMVSCSNCTDWQAFRMKIRYVDRKNNKRGYVHTLNSTAIASTRTITAILENYQREDGVVEVPKVLRKYLEIFPKAPKDYIYPLKNKII.

252-254 serves as a coordination point for L-serine; it reads TAE. Residues 283-285 and valine 299 each bind ATP; that span reads RKE. Glutamate 306 contacts L-serine. Position 370–373 (370–373) interacts with ATP; that stretch reads EMVS. Threonine 406 lines the L-serine pocket.

This sequence belongs to the class-II aminoacyl-tRNA synthetase family. Type-1 seryl-tRNA synthetase subfamily. In terms of assembly, homodimer. The tRNA molecule binds across the dimer.

Its subcellular location is the cytoplasm. The enzyme catalyses tRNA(Ser) + L-serine + ATP = L-seryl-tRNA(Ser) + AMP + diphosphate + H(+). It catalyses the reaction tRNA(Sec) + L-serine + ATP = L-seryl-tRNA(Sec) + AMP + diphosphate + H(+). Its pathway is aminoacyl-tRNA biosynthesis; selenocysteinyl-tRNA(Sec) biosynthesis; L-seryl-tRNA(Sec) from L-serine and tRNA(Sec): step 1/1. Catalyzes the attachment of serine to tRNA(Ser). Is also able to aminoacylate tRNA(Sec) with serine, to form the misacylated tRNA L-seryl-tRNA(Sec), which will be further converted into selenocysteinyl-tRNA(Sec). The protein is Serine--tRNA ligase of Saccharolobus islandicus (strain Y.N.15.51 / Yellowstone #2) (Sulfolobus islandicus).